Consider the following 199-residue polypeptide: MPKILVLYYSTYGHIETMAEAIAEGARSAGAEVDVKRVPETVPLDIAEKNHFKLDQKAPVATVAELEDYDAIIVGTGTRFGRMSSQMAAFLDGAGGLWARGALNGKVGAAFASTATQHGGQETTLFSIITNLLHFGMTIVGLPYAYQGQMGVDEVKGGAPYGATTIADGDGSRQPSATDLDGARFQGRHVAEITAKLVG.

One can recognise a Flavodoxin-like domain in the interval 4 to 190 (ILVLYYSTYG…DGARFQGRHV (187 aa)). Residues 10-15 (STYGHI) and 78-80 (TRF) contribute to the FMN site. Tyrosine 12 is a binding site for NAD(+). Tryptophan 98 provides a ligand contact to substrate. FMN is bound by residues 113 to 119 (STATQHG) and histidine 134.

Belongs to the WrbA family. The cofactor is FMN.

It carries out the reaction a quinone + NADH + H(+) = a quinol + NAD(+). It catalyses the reaction a quinone + NADPH + H(+) = a quinol + NADP(+). The polypeptide is NAD(P)H dehydrogenase (quinone) (Rhizorhabdus wittichii (strain DSM 6014 / CCUG 31198 / JCM 15750 / NBRC 105917 / EY 4224 / RW1) (Sphingomonas wittichii)).